The primary structure comprises 158 residues: NAD(P)H-quinone oxidoreductase subunit J, chloroplastic (158 aa).

The protein belongs to the complex I 30 kDa subunit family. As to quaternary structure, NDH is composed of at least 16 different subunits, 5 of which are encoded in the nucleus.

Its subcellular location is the plastid. The protein localises to the chloroplast thylakoid membrane. The catalysed reaction is a plastoquinone + NADH + (n+1) H(+)(in) = a plastoquinol + NAD(+) + n H(+)(out). The enzyme catalyses a plastoquinone + NADPH + (n+1) H(+)(in) = a plastoquinol + NADP(+) + n H(+)(out). In terms of biological role, NDH shuttles electrons from NAD(P)H:plastoquinone, via FMN and iron-sulfur (Fe-S) centers, to quinones in the photosynthetic chain and possibly in a chloroplast respiratory chain. The immediate electron acceptor for the enzyme in this species is believed to be plastoquinone. Couples the redox reaction to proton translocation, and thus conserves the redox energy in a proton gradient. This is NAD(P)H-quinone oxidoreductase subunit J, chloroplastic from Oenothera argillicola (Appalachian evening primrose).